The primary structure comprises 126 residues: Large ribosomal subunit protein bL12 (126 aa).

The protein belongs to the bacterial ribosomal protein bL12 family. As to quaternary structure, homodimer. Part of the ribosomal stalk of the 50S ribosomal subunit. Forms a multimeric L10(L12)X complex, where L10 forms an elongated spine to which 2 to 4 L12 dimers bind in a sequential fashion. Binds GTP-bound translation factors.

Its function is as follows. Forms part of the ribosomal stalk which helps the ribosome interact with GTP-bound translation factors. Is thus essential for accurate translation. This chain is Large ribosomal subunit protein bL12, found in Beijerinckia indica subsp. indica (strain ATCC 9039 / DSM 1715 / NCIMB 8712).